The primary structure comprises 350 residues: Serine-threonine kinase receptor-associated protein (350 aa).

7 WD repeats span residues Gly12–Leu56, Gly57–Thr96, Ala98–Lys137, Gly141–Ser179, Leu180–Val212, Glu221–Lys262, and Gly263–Leu302. 3 positions are modified to phosphoserine: Ser312, Ser335, and Ser338. A disordered region spans residues Ala326–Ala350. Over residues Asn337–Ala350 the composition is skewed to polar residues. Phosphotyrosine is present on Tyr342.

Belongs to the WD repeat STRAP family. In terms of assembly, part of the core SMN complex that contains SMN1, GEMIN2/SIP1, DDX20/GEMIN3, GEMIN4, GEMIN5, GEMIN6, GEMIN7, GEMIN8 and STRAP/UNRIP. Part of the SMN-Sm complex that contains SMN1, GEMIN2/SIP1, DDX20/GEMIN3, GEMIN4, GEMIN5, GEMIN6, GEMIN7, GEMIN8, STRAP/UNRIP and the Sm proteins SNRPB, SNRPD1, SNRPD2, SNRPD3, SNRPE, SNRPF and SNRPG. Interacts directly with GEMIN6 and GEMIN7. Associates with the SMN complex in the cytoplasm but not in the nucleus. Also interacts with CSDE1/UNR and MAWBP. Interacts with PDPK1. Interacts with TRIM48.

Its subcellular location is the cytoplasm. It localises to the nucleus. In terms of biological role, the SMN complex catalyzes the assembly of small nuclear ribonucleoproteins (snRNPs), the building blocks of the spliceosome, and thereby plays an important role in the splicing of cellular pre-mRNAs. Most spliceosomal snRNPs contain a common set of Sm proteins SNRPB, SNRPD1, SNRPD2, SNRPD3, SNRPE, SNRPF and SNRPG that assemble in a heptameric protein ring on the Sm site of the small nuclear RNA to form the core snRNP (Sm core). In the cytosol, the Sm proteins SNRPD1, SNRPD2, SNRPE, SNRPF and SNRPG are trapped in an inactive 6S pICln-Sm complex by the chaperone CLNS1A that controls the assembly of the core snRNP. To assemble core snRNPs, the SMN complex accepts the trapped 5Sm proteins from CLNS1A forming an intermediate. Binding of snRNA inside 5Sm triggers eviction of the SMN complex, thereby allowing binding of SNRPD3 and SNRPB to complete assembly of the core snRNP. STRAP plays a role in the cellular distribution of the SMN complex. Negatively regulates TGF-beta signaling but positively regulates the PDPK1 kinase activity by enhancing its autophosphorylation and by significantly reducing the association of PDPK1 with 14-3-3 protein. This chain is Serine-threonine kinase receptor-associated protein (Strap), found in Mus musculus (Mouse).